A 159-amino-acid polypeptide reads, in one-letter code: Endoribonuclease YbeY (159 aa).

3 residues coordinate Zn(2+): His-114, His-118, and His-124.

Belongs to the endoribonuclease YbeY family. Zn(2+) serves as cofactor.

It is found in the cytoplasm. In terms of biological role, single strand-specific metallo-endoribonuclease involved in late-stage 70S ribosome quality control and in maturation of the 3' terminus of the 16S rRNA. The chain is Endoribonuclease YbeY from Pectobacterium carotovorum subsp. carotovorum (strain PC1).